The following is a 175-amino-acid chain: uncharacterized protein (175 aa).

2 disordered regions span residues 68-111 (NKSN…DDDQ) and 154-175 (PERA…KLTT). Residues 95 to 106 (EEQPMMPYQQPP) are compositionally biased toward low complexity.

The protein belongs to the asfivirus H171R family.

The protein localises to the virion. This is an uncharacterized protein from African swine fever virus (isolate Pig/Kenya/KEN-50/1950) (ASFV).